A 180-amino-acid polypeptide reads, in one-letter code: Acireductone dioxygenase (180 aa).

Residues His99, His101, Glu105, and His145 each coordinate Fe(2+). The Ni(2+) site is built by His99, His101, Glu105, and His145.

The protein belongs to the acireductone dioxygenase (ARD) family. In terms of assembly, monomer. Requires Fe(2+) as cofactor. Ni(2+) serves as cofactor.

It carries out the reaction 1,2-dihydroxy-5-(methylsulfanyl)pent-1-en-3-one + O2 = 3-(methylsulfanyl)propanoate + CO + formate + 2 H(+). The catalysed reaction is 1,2-dihydroxy-5-(methylsulfanyl)pent-1-en-3-one + O2 = 4-methylsulfanyl-2-oxobutanoate + formate + 2 H(+). The protein operates within amino-acid biosynthesis; L-methionine biosynthesis via salvage pathway; L-methionine from S-methyl-5-thio-alpha-D-ribose 1-phosphate: step 5/6. In terms of biological role, catalyzes 2 different reactions between oxygen and the acireductone 1,2-dihydroxy-3-keto-5-methylthiopentene (DHK-MTPene) depending upon the metal bound in the active site. Fe-containing acireductone dioxygenase (Fe-ARD) produces formate and 2-keto-4-methylthiobutyrate (KMTB), the alpha-ketoacid precursor of methionine in the methionine recycle pathway. Ni-containing acireductone dioxygenase (Ni-ARD) produces methylthiopropionate, carbon monoxide and formate, and does not lie on the methionine recycle pathway. This Geobacillus kaustophilus (strain HTA426) protein is Acireductone dioxygenase.